Reading from the N-terminus, the 361-residue chain is Velvet complex subunit B (361 aa).

The region spanning 1–336 (MIVRTEDQKL…GNQGQKLPLR (336 aa)) is the Velvet domain. Disordered stretches follow at residues 42–222 (PSST…NNIP) and 327–361 (GNQG…EDDS). Low complexity-rich tracts occupy residues 57 to 74 (PSAS…SRPP) and 93 to 107 (PPSS…SQSQ). Over residues 108–127 (DNLTPSSPYPPHSNSEQPQT) the composition is skewed to polar residues. Positions 130–147 (YPPPPPIDRAAPFPPPVL) are enriched in pro residues. Polar residues-rich tracts occupy residues 149–168 (SIQS…NNDD), 181–196 (GYTN…YGSG), and 212–222 (SGNATPQNNIP). Residues 335 to 349 (LRNRHGTGSKRRRRN) are compositionally biased toward basic residues.

Belongs to the velvet family. VelB subfamily. In terms of assembly, component of the heterotrimeric velvet complex composed of laeA, veA and velB; VeA acting as a bridging protein between laeA and velB. Forms a heterodimeric complex with vosA; the formation of the velB-vosA complex is light-dependent.

It is found in the nucleus. It localises to the cytoplasm. In terms of biological role, component of the velvet transcription factor complex that controls sexual/asexual developmental ratio in response to light, promoting sexual development in the darkness while stimulating asexual sporulation under illumination. The velvet complex acts as a global regulator for secondary metabolite gene expression. Component of the velB-VosA heterodimeric complex that plays a dual role in activating genes associated with spore maturation and repressing certain development-associated genes. The velB-VosA complex binds DNA through the DNA-binding domain of vosA that recognizes an 11-nucleotide consensus sequence 5'-CTGGCCGCGGC-3' consisting of two motifs in the promoters of key developmental regulatory genes. This is Velvet complex subunit B from Coprinopsis cinerea (strain Okayama-7 / 130 / ATCC MYA-4618 / FGSC 9003) (Inky cap fungus).